The following is a 2320-amino-acid chain: Sperm-associated antigen 17 (2320 aa).

2 stretches are compositionally biased toward basic and acidic residues: residues 139–171 and 199–210; these read DQQRRENEKKMVEERTKSEKDKGKGKSPKEKKV and RRGEDDEAKSYI. 11 disordered regions span residues 139–211, 388–407, 682–739, 894–928, 950–1001, 1084–1118, 1191–1221, 1334–1367, 1393–1416, 1983–2028, and 2080–2101; these read DQQR…SYID, IPEPPPSTAPAPTGKKKAQY, AEQD…SMDQ, SASKIPGPKRSKTNKVSSKTELSDQEKDKEKEKDK, EERL…AKTL, KEKEEKNSEEEEEEEEEKEEVEEKKPKEGEEEKVK, QGKGKAKPKGKEKHKDSIKEEELPKEEEKKN, SSPDSGPVYTSPELPTSPHNGDLVDSASQPKSET, DIIPEVPPPTPVESHIGTWFTTTP, KEAS…YENV, and TKESVSQRQTENVTRPPTEEPD. Residues 703-720 are compositionally biased toward polar residues; sequence VTGSTSNSTKPWNSSNRQ. The stretch at 865 to 965 forms a coiled coil; sequence EEAKYQEAKM…EKKAEKKGKD (101 aa). 2 stretches are compositionally biased toward basic and acidic residues: residues 914–928 and 950–999; these read ELSDQEKDKEKEKDK and EERL…EPAK. Residues 1090-1103 show a composition bias toward acidic residues; that stretch reads NSEEEEEEEEEKEE. 2 stretches are compositionally biased toward basic and acidic residues: residues 1104–1118 and 1203–1221; these read VEEKKPKEGEEEKVK and KHKDSIKEEELPKEEEKKN. Polar residues-rich tracts occupy residues 2012-2028 and 2082-2094; these read VNKSLQTSSSQNQYENV and ESVSQRQTENVTR.

Interacts (via the C-terminus) with SPAG6; the interaction probably occurs on polymerized microtubules. In terms of tissue distribution, highly expressed in testis, round spermatids, testicular sperm, epididymal sperm and in condensing spermatids (at protein level). Expressed in organs that contain cilia-bearing cells including brain, oviduct, lung, and uterus. Expressed in articular cartilage and bone.

It localises to the cytoplasm. Its subcellular location is the cytoskeleton. The protein localises to the flagellum axoneme. It is found in the cytoplasmic vesicle. The protein resides in the secretory vesicle. It localises to the acrosome. Its subcellular location is the golgi apparatus. Its function is as follows. Component of the central pair apparatus of ciliary axonemes. Plays a critical role in the function and structure of motile cilia. May play a role in endochondral bone formation, most likely because of a function in primary cilia of chondrocytes and osteoblasts. Essential for normal spermatogenesis and male fertility. Required for normal manchette structure, transport of proteins along the manchette microtubules and formation of the sperm head and flagellum. Essential for sperm flagellum development and proper assembly of the respiratory motile cilia central pair apparatus, but not the brain ependymal cilia. This Mus musculus (Mouse) protein is Sperm-associated antigen 17 (Spag17).